A 104-amino-acid polypeptide reads, in one-letter code: Naphthalene 1,2-dioxygenase system, ferredoxin component (104 aa).

A Rieske domain is found at I6–I101. Positions 45, 47, 64, and 67 each coordinate [2Fe-2S] cluster.

Belongs to the bacterial ring-hydroxylating dioxygenase ferredoxin component family. The naphthalene dioxygenase (NDO) multicomponent enzyme system is composed of an electron transfer component and a dioxygenase component (iron sulfur protein (ISP)). The electron transfer component is composed of a ferredoxin reductase (NdoR) and a ferredoxin (NdoA), and the dioxygenase component is formed of a heterohexamer (trimer of heterodimers) of three large alpha subunits (NdoB) and three small beta subunits (NdoC). [2Fe-2S] cluster is required as a cofactor.

It functions in the pathway aromatic compound metabolism; naphthalene degradation. Its function is as follows. Component of the naphthalene dioxygenase (NDO) multicomponent enzyme system which catalyzes the incorporation of both atoms of molecular oxygen into naphthalene to form cis-(1R,2S)-dihydroxy-1,2-dihydronaphthalene. Functions as an intermediate electron transfer protein via a specific interaction with iron sulfur protein components (ISP) (NdoB and NdoC). Also able to catalyze the cis-dihydroxylation of biphenyl and phenanthrene. This Pseudomonas putida (Arthrobacter siderocapsulatus) protein is Naphthalene 1,2-dioxygenase system, ferredoxin component.